The sequence spans 173 residues: Large ribosomal subunit protein uL16 (173 aa).

The protein belongs to the universal ribosomal protein uL16 family.

This chain is Large ribosomal subunit protein uL16, found in Methanosphaerula palustris (strain ATCC BAA-1556 / DSM 19958 / E1-9c).